The following is a 173-amino-acid chain: Photosystem I assembly protein Ycf3 (173 aa).

TPR repeat units lie at residues 35–68 (AYIYYREGFAAQNNGDYSEALENYEESLKLEENA), 72–105 (GETLKNMAIIYMSNGDEDKALDTYQKALEQNPKQ), and 120–153 (GRALQQNGKQDESDIWFDKAAEVWTKAVRLYPGG).

It belongs to the Ycf3 family.

The protein localises to the cellular thylakoid membrane. Its function is as follows. Essential for the assembly of the photosystem I (PSI) complex. May act as a chaperone-like factor to guide the assembly of the PSI subunits. The sequence is that of Photosystem I assembly protein Ycf3 from Prochlorococcus marinus (strain SARG / CCMP1375 / SS120).